Here is a 381-residue protein sequence, read N- to C-terminus: Creatine kinase M-type (381 aa).

The region spanning 11–98 (KLNYKPQEEY…FDPIIQDRHG (88 aa)) is the Phosphagen kinase N-terminal domain. Residues 125-367 (YVLSSRVRTG…KLMVEMEKKL (243 aa)) enclose the Phosphagen kinase C-terminal domain. 128–132 (SSRVR) provides a ligand contact to ATP. Ser164 carries the phosphoserine modification. Residue Thr166 is modified to Phosphothreonine. The residue at position 178 (Ser178) is a Phosphoserine. Position 180 is a phosphothreonine (Thr180). His191 provides a ligand contact to ATP. Phosphoserine is present on Ser199. The ATP site is built by Arg236 and Arg292. Residues Thr313 and Thr322 each carry the phosphothreonine modification. ATP-binding positions include 320–325 (RGTGGV) and Asp335. At Ser372 the chain carries Phosphoserine.

The protein belongs to the ATP:guanido phosphotransferase family. Dimer of identical or non-identical chains, which can be either B (brain type) or M (muscle type). With MM being the major form in skeletal muscle and myocardium, MB existing in myocardium, and BB existing in many tissues, especially brain.

Its subcellular location is the cytoplasm. It catalyses the reaction creatine + ATP = N-phosphocreatine + ADP + H(+). Reversibly catalyzes the transfer of phosphate between ATP and various phosphogens (e.g. creatine phosphate). Creatine kinase isoenzymes play a central role in energy transduction in tissues with large, fluctuating energy demands, such as skeletal muscle, heart, brain and spermatozoa. The protein is Creatine kinase M-type (Ckm) of Mus musculus (Mouse).